The following is an 87-amino-acid chain: Large ribosomal subunit protein bL27 (87 aa).

It belongs to the bacterial ribosomal protein bL27 family.

The sequence is that of Large ribosomal subunit protein bL27 from Stenotrophomonas maltophilia (strain R551-3).